The chain runs to 459 residues: Alcohol acyl transferase 1 allele RGc (459 aa).

Catalysis depends on proton acceptor residues histidine 164 and asparagine 385.

It belongs to the plant acyltransferase family. Expressed at very low levels in the skin of ripe fruit.

Functionally, involved in the biosynthesis of volatile esters which confer ripe apple fruit flavor. Alcohol acyl transferase that can use a wide range of alcohols as substrate to produce esters. The chain is Alcohol acyl transferase 1 allele RGc from Malus domestica (Apple).